Here is a 58-residue protein sequence, read N- to C-terminus: Leucine zipper protein 6 (58 aa).

As to expression, widely expressed, highest levels found in brain, placenta, spleen, testis, and ovary. Up-regulated in some tumor cells.

In Homo sapiens (Human), this protein is Leucine zipper protein 6 (LUZP6).